Reading from the N-terminus, the 165-residue chain is Nicotine 6-hydroxylase small subunit (165 aa).

The 2Fe-2S ferredoxin-type domain occupies 10–86 (VEIDVEVNGR…GRSIRTVEDL (77 aa)). Positions 48, 53, 56, and 68 each coordinate [2Fe-2S] cluster.

As to quaternary structure, heterotrimer composed of a large subunit (NdhL), a medium subunit (NdhM) and a small subunit (NdhS). The cofactor is [2Fe-2S] cluster.

It is found in the cytoplasm. It catalyses the reaction (R)-nicotine + A + H2O = (R)-6-hydroxynicotine + AH2. It carries out the reaction (S)-nicotine + A + H2O = (S)-6-hydroxynicotine + AH2. It functions in the pathway alkaloid degradation; nicotine degradation; 6-hydroxypseudooxynicotine from nicotine (R-isomer route): step 1/2. Its pathway is alkaloid degradation; nicotine degradation; 6-hydroxypseudooxynicotine from nicotine (S-isomer route): step 1/2. Its activity is regulated as follows. Nicotine dehydrogenase activity is inhibited by tungsten. Component of the nicotine 6-hydroxylase, which is involved in the degradation of nicotine. Catalyzes the hydroxylation of the pyridine ring at C6 to form 6-hydroxynicotine. Can use both L-nicotine and D-nicotine. The sequence is that of Nicotine 6-hydroxylase small subunit from Paenarthrobacter nicotinovorans (Arthrobacter nicotinovorans).